The following is a 307-amino-acid chain: Dioxygenase swnH1 (307 aa).

Residues histidine 149, aspartate 151, and histidine 227 each contribute to the Fe cation site.

This sequence belongs to the PhyH family. As to quaternary structure, homodimer. Fe cation is required as a cofactor.

It participates in mycotoxin biosynthesis. Dioxygenase; part of the gene cluster that mediates the biosynthesis of swainsonine (SW), a cytotoxic fungal alkaloid and a potential cancer therapy drug. Swainsonine production occurs via a multibranched pathway and is dispensable for fungal colonization of plants and infection of insect hosts. The first step of swainsonine biosynthesis is the production of the precursor pipecolic acid (PA) via conversion of L-lysine (Lys) to 1-piperideine-6-carboxylate (P6C) by the aminotransferase swnA, the latter being further reduced to PA by the reductase swnR. PA can be converted from lysine by both the SW biosynthetic cluster and the unclustered genes such as lysine cyclodeaminase. The PKS-NRPS hybrid synthetase swnK uptakes and condensates PA and malonyl-CoA with and without skipping of the ketoreductase (KR) domain in order to produce 3 intermediates, 1-oxoindolizidine, (1S)-1-hydroxyindolizin, and (1R)-1-hydroxyindolizine; with the transisomer (1S)-1-hydroxyindolizin being predominant. The terminal thioester reductase (TE) domain of swnK is involved in reduction of the thioester bond to release the intermediate aldehydes. The oxidoreductase swnN could contribute to the reduction of 1-oxoindolizidine to (1S)-1-hydroxyindolizin and (1R)-1-hydroxyindolizine, contributing to the major route of SW production. The dioxygenase swnH2 would be responsible for the oxidization of (1R)-1-hydroxyindolizine into (1R,2S)-1,2-dihydroxyindolizine and of (1S)-1-hydroxyindolizin to yield both (1R,2S)-1,2-dihydroxyindolizine and (1S,2S)-1,2-dihydroxyindolizine. The dioxygenase swnH1 then performs the conversion of the 1,2-dihydroxyindolizine epimers to SW. The sequence is that of Dioxygenase swnH1 from Metarhizium robertsii (strain ARSEF 23 / ATCC MYA-3075) (Metarhizium anisopliae (strain ARSEF 23)).